The sequence spans 192 residues: uncharacterized protein (192 aa).

The first 17 residues, 1 to 17 (MFLHLILLAGLAPVVYL), serve as a signal peptide directing secretion.

This is an uncharacterized protein from Caenorhabditis elegans.